The primary structure comprises 323 residues: Germacrene A synthase (323 aa).

Asp-82, Asp-86, Asn-222, Ser-226, and Glu-230 together coordinate Mg(2+). The DDXXD motif motif lies at Asp-82–Asp-86.

Belongs to the terpene synthase family. Mg(2+) serves as cofactor.

The catalysed reaction is (2E,6E)-farnesyl diphosphate = 5-epi-alpha-selinene + diphosphate. Its function is as follows. Catalyzes the cyclization of farnesyl diphosphate (FPP) to the sesquiterpene germacrene A. The protein is Germacrene A synthase of Nostoc punctiforme (strain ATCC 29133 / PCC 73102).